We begin with the raw amino-acid sequence, 131 residues long: L-ectoine synthase (131 aa).

Belongs to the ectoine synthase family.

The catalysed reaction is (2S)-4-acetamido-2-aminobutanoate = L-ectoine + H2O. Its pathway is amine and polyamine biosynthesis; ectoine biosynthesis; L-ectoine from L-aspartate 4-semialdehyde: step 3/3. Its function is as follows. Catalyzes the circularization of gamma-N-acetyl-alpha,gamma-diaminobutyric acid (ADABA) to ectoine (1,4,5,6-tetrahydro-2-methyl-4-pyrimidine carboxylic acid), which is an excellent osmoprotectant. This Nocardia farcinica (strain IFM 10152) protein is L-ectoine synthase.